A 225-amino-acid polypeptide reads, in one-letter code: uncharacterized protein (225 aa).

The PCI domain occupies 166–214 (LNSDVIKDKILAIIENVGEITYEELAEKINIPEEDLEKYLSELKESGDI).

This is an uncharacterized protein from Methanocaldococcus jannaschii (strain ATCC 43067 / DSM 2661 / JAL-1 / JCM 10045 / NBRC 100440) (Methanococcus jannaschii).